The sequence spans 132 residues: Mini-ribonuclease 3 (132 aa).

Asp-17 is a catalytic residue.

The protein belongs to the MrnC RNase family. Homodimer. It depends on Mg(2+) as a cofactor.

The protein localises to the cytoplasm. Functionally, involved in correct processing of both the 5' and 3' ends of 23S rRNA precursor. Processes 30S rRNA precursor transcript even in absence of ribonuclease 3 (Rnc); Rnc processes 30S rRNA into smaller rRNA precursors. The polypeptide is Mini-ribonuclease 3 (Enterococcus faecalis (strain ATCC 700802 / V583)).